The sequence spans 1791 residues: 1-phosphatidylinositol-3-phosphate 5-kinase FAB1B (1791 aa).

The segment at 39-105 (DQSCRVCYEC…VCNYCFRQWE (67 aa)) adopts an FYVE-type zinc-finger fold. Zn(2+) is bound by residues cysteine 45, cysteine 48, cysteine 61, cysteine 64, cysteine 69, cysteine 72, cysteine 97, and cysteine 100. 4 disordered regions span residues 166–186 (HGVS…SRRS), 279–370 (EQFQ…DRTT), 770–790 (SDLS…NPIV), and 834–859 (QQNN…DHQS). The segment covering 279-293 (EQFQKKSEHDGRDEC) has biased composition (basic and acidic residues). Over residues 324-345 (PENEEDERESALFDEEDNEGDA) the composition is skewed to acidic residues. Residues 838–850 (EKPKETQSQKEEF) show a composition bias toward basic and acidic residues. Residues 1077 to 1111 (EKGFRRRIGELEEVLQKEKAEFEENMQKILHREVN) adopt a coiled-coil conformation. Basic and acidic residues predominate over residues 1151–1164 (NSDDTKREENEKPP). Positions 1151-1242 (NSDDTKREEN…DTSYPLENKV (92 aa)) are disordered. 2 stretches are compositionally biased toward polar residues: residues 1167–1188 (KSQT…SEVN) and 1196–1206 (TGDTGSLNNVQ). One can recognise a PIPK domain in the interval 1433–1758 (SELNIPRPVD…RFRKAMTTYF (326 aa)). A disordered region spans residues 1769-1791 (NVVANNSKSDQPEETSQAGTQAE). The span at 1771-1791 (VANNSKSDQPEETSQAGTQAE) shows a compositional bias: polar residues.

As to quaternary structure, component of the PI(3,5)P2 regulatory complex at least composed of ATG18, SAC/FIG4, FAB1 and VAC14. It depends on Mg(2+) as a cofactor. Mn(2+) is required as a cofactor. Ubiquitous with highest expression levels in the root hair zone, pollen, and stamens.

The protein resides in the endosome membrane. The enzyme catalyses a 1,2-diacyl-sn-glycero-3-phospho-(1D-myo-inositol-3-phosphate) + ATP = a 1,2-diacyl-sn-glycero-3-phospho-(1D-myo-inositol-3,5-bisphosphate) + ADP + H(+). In terms of biological role, the PI(3,5)P2 regulatory complex regulates both the synthesis and turnover of phosphatidylinositol 3,5-bisphosphate (PtdIns(3,5)P2). Catalyzes the phosphorylation of phosphatidylinositol 3-phosphate on the fifth hydroxyl of the myo-inositol ring, to form phosphatidylinositol 3,5-bisphosphate. Plays an important role in maintenance of endomembrane homeostasis including endocytosis, vacuole formation, and vacuolar acidification processes. Required for development of viable pollen. Might mediate recycling of auxin transporters. The protein is 1-phosphatidylinositol-3-phosphate 5-kinase FAB1B (FAB1B) of Arabidopsis thaliana (Mouse-ear cress).